Here is a 278-residue protein sequence, read N- to C-terminus: 4-deoxy-L-threo-5-hexosulose-uronate ketol-isomerase (278 aa).

Zn(2+)-binding residues include histidine 196, histidine 198, glutamate 203, and histidine 245.

Belongs to the KduI family. Zn(2+) serves as cofactor.

It catalyses the reaction 5-dehydro-4-deoxy-D-glucuronate = 3-deoxy-D-glycero-2,5-hexodiulosonate. It participates in glycan metabolism; pectin degradation; 2-dehydro-3-deoxy-D-gluconate from pectin: step 4/5. In terms of biological role, catalyzes the isomerization of 5-dehydro-4-deoxy-D-glucuronate to 3-deoxy-D-glycero-2,5-hexodiulosonate. The polypeptide is 4-deoxy-L-threo-5-hexosulose-uronate ketol-isomerase (Salmonella paratyphi A (strain ATCC 9150 / SARB42)).